The chain runs to 116 residues: MRSSVGEFMIYQVIGTVIGIAGIIVSFARFRESRTSPGGLLLWLILWVSVILFSLNPPFSTRIANLLGIGRGLDFLLIIGILGAYYLLFRIYLMVDRIQQDITELVHEIALREHDD.

3 helical membrane passes run 8 to 28 (FMIY…VSFA), 39 to 59 (GLLL…NPPF), and 75 to 95 (FLLI…YLMV).

To M.jannaschii MJ1580.

It is found in the cell membrane. This is an uncharacterized protein from Methanothermobacter thermautotrophicus (strain ATCC 29096 / DSM 1053 / JCM 10044 / NBRC 100330 / Delta H) (Methanobacterium thermoautotrophicum).